An 891-amino-acid polypeptide reads, in one-letter code: 26S proteasome non-ATPase regulatory subunit 2 homolog A (891 aa).

The interval 1-44 (MAPTQDPNSVGGGAKKDEATLKVPSKDPKKKDEKKDEDLSEEDL) is disordered. The short motif at 14–21 (AKKDEATL) is the Nuclear localization signal element. Residues 14-37 (AKKDEATLKVPSKDPKKKDEKKDE) are compositionally biased toward basic and acidic residues. K218 is covalently cross-linked (Glycyl lysine isopeptide (Lys-Gly) (interchain with G-Cter in ubiquitin)). The residue at position 219 (T219) is an O-acetylthreonine. PC repeat units lie at residues 414–447 (SAAA…PIIA), 448–484 (GALL…SVRI), 485–519 (GAIM…PLDV), 522–556 (FASL…AELG), 565–594 (LGLG…KIRK), 674–705 (LALG…EVAM), and 724–739 (AGML…KDMS).

Belongs to the proteasome subunit S2 family. As to quaternary structure, component of the 19S regulatory particle (RP/PA700) base subcomplex of the 26S proteasome. The 26S proteasome is composed of a core protease (CP), known as the 20S proteasome, capped at one or both ends by the 19S regulatory particle (RP/PA700). The RP/PA700 complex is composed of at least 17 different subunits in two subcomplexes, the base and the lid, which form the portions proximal and distal to the 20S proteolytic core, respectively. Interacts with JMJ27. As to expression, expressed in stems, leaves, buds, flowers, siliques and developing seeds.

It localises to the nucleus. Its subcellular location is the cytoplasm. Its function is as follows. Acts as a regulatory subunit of the 26 proteasome which is involved in the ATP-dependent degradation of ubiquitinated proteins. Required during embryogenesis. Required for optimal plant growth and stress responses. Required for innate immunity. Prevents JMJ27 accumulation in non-drought conditions. This is 26S proteasome non-ATPase regulatory subunit 2 homolog A from Arabidopsis thaliana (Mouse-ear cress).